A 157-amino-acid polypeptide reads, in one-letter code: Cyclic pyranopterin monophosphate synthase (157 aa).

Residues 74–76 (MCH) and 112–113 (ME) contribute to the substrate site. Residue Asp127 is part of the active site.

Belongs to the MoaC family. In terms of assembly, homohexamer; trimer of dimers.

The enzyme catalyses (8S)-3',8-cyclo-7,8-dihydroguanosine 5'-triphosphate = cyclic pyranopterin phosphate + diphosphate. It participates in cofactor biosynthesis; molybdopterin biosynthesis. In terms of biological role, catalyzes the conversion of (8S)-3',8-cyclo-7,8-dihydroguanosine 5'-triphosphate to cyclic pyranopterin monophosphate (cPMP). The chain is Cyclic pyranopterin monophosphate synthase from Sulfurovum sp. (strain NBC37-1).